A 438-amino-acid chain; its full sequence is PHAF1 protein CG7083 (438 aa).

The protein belongs to the PHAF1 family.

It localises to the cytoplasm. The protein resides in the preautophagosomal structure. Functionally, may play a regulatory role in autophagic activity. This Drosophila melanogaster (Fruit fly) protein is PHAF1 protein CG7083.